A 692-amino-acid chain; its full sequence is Elongation factor G (692 aa).

Residues 9–284 form the tr-type G domain; it reads HMVRNIGIAA…AVVDYLPAPD (276 aa). Residues 18–25, 82–86, and 136–139 contribute to the GTP site; these read AHIDAGKT, DTPGH, and NKMD.

Belongs to the TRAFAC class translation factor GTPase superfamily. Classic translation factor GTPase family. EF-G/EF-2 subfamily.

The protein localises to the cytoplasm. Its function is as follows. Catalyzes the GTP-dependent ribosomal translocation step during translation elongation. During this step, the ribosome changes from the pre-translocational (PRE) to the post-translocational (POST) state as the newly formed A-site-bound peptidyl-tRNA and P-site-bound deacylated tRNA move to the P and E sites, respectively. Catalyzes the coordinated movement of the two tRNA molecules, the mRNA and conformational changes in the ribosome. This chain is Elongation factor G, found in Campylobacter curvus (strain 525.92).